Here is a 169-residue protein sequence, read N- to C-terminus: Cell division inhibitor SulA (169 aa).

A ftsZ binding region spans residues 106–112 (ALRTGNY). Residues 162-169 (KIHSNLYH) form a lon protease binding region.

The protein belongs to the SulA family. Interacts with FtsZ. Is rapidly cleaved and degraded by the Lon protease once DNA damage is repaired.

Its function is as follows. Component of the SOS system and an inhibitor of cell division. Accumulation of SulA causes rapid cessation of cell division and the appearance of long, non-septate filaments. In the presence of GTP, binds a polymerization-competent form of FtsZ in a 1:1 ratio, thus inhibiting FtsZ polymerization and therefore preventing it from participating in the assembly of the Z ring. This mechanism prevents the premature segregation of damaged DNA to daughter cells during cell division. In Citrobacter koseri (strain ATCC BAA-895 / CDC 4225-83 / SGSC4696), this protein is Cell division inhibitor SulA.